The following is a 152-amino-acid chain: Transcriptional regulator MraZ (152 aa).

SpoVT-AbrB domains are found at residues 5–52 (ATLV…PLPA) and 81–124 (ASEC…DEQT).

Belongs to the MraZ family. Forms oligomers.

It localises to the cytoplasm. The protein localises to the nucleoid. Functionally, negatively regulates its own expression and that of the subsequent genes in the proximal part of the division and cell wall (dcw) gene cluster. Acts by binding directly to DNA. May also regulate the expression of genes outside the dcw cluster. This chain is Transcriptional regulator MraZ, found in Sodalis glossinidius (strain morsitans).